We begin with the raw amino-acid sequence, 150 residues long: Interleukin-17A (150 aa).

The first 17 residues, 1–17 (MCLMLLLLLNLEATVKA), serve as a signal peptide directing secretion. Residues 54-75 (SSRRPSDYLNRSTSPWTLSRNE) form a disordered region. Positions 62-72 (LNRSTSPWTLS) are enriched in polar residues. An N-linked (GlcNAc...) asparagine glycan is attached at N63. Intrachain disulfides connect C89–C139 and C94–C141.

The protein belongs to the IL-17 family. Homodimer. Forms complexes with IL17RA and IL17RC receptors with 2:1 binding stoichiometry: two receptor chains for one interleukin molecule. IL17A homodimer preferentially drives the formation of IL17RA-IL17RC heterodimeric receptor complex. IL17A homodimer adopts an asymmetrical ternary structure with one IL17RA molecule, allowing for high affinity interactions of one IL17A monomer with one IL17RA molecule (via D1 and D2 domains), while disfavoring binding of a second IL17RA molecule on the other IL17A monomer. Heterodimer with IL17F. IL17A-IL17F forms complexes with IL17RA-IL17RC, but with lower affinity when compared to IL17A homodimer. IL17RA and IL17RC chains cannot distinguish between IL17A and IL17F molecules, potentially enabling the formation of topologically distinct complexes.

The protein localises to the secreted. In terms of biological role, effector cytokine of innate and adaptive immune system involved in antimicrobial host defense and maintenance of tissue integrity. Signals via IL17RA-IL17RC heterodimeric receptor complex, triggering homotypic interaction of IL17RA and IL17RC chains with TRAF3IP2 adapter. This leads to downstream TRAF6-mediated activation of NF-kappa-B and MAPkinase pathways ultimately resulting in transcriptional activation of cytokines, chemokines, antimicrobial peptides and matrix metalloproteinases, with potential strong immune inflammation. Plays an important role in connecting T cell-mediated adaptive immunity and acute inflammatory response to destroy extracellular bacteria and fungi. As a signature effector cytokine of T-helper 17 cells (Th17), primarily induces neutrophil activation and recruitment at infection and inflammatory sites. In airway epithelium, mediates neutrophil chemotaxis via induction of CXCL1 and CXCL5 chemokines. In secondary lymphoid organs, contributes to germinal center formation by regulating the chemotactic response of B cells to CXCL12 and CXCL13, enhancing retention of B cells within the germinal centers, B cell somatic hypermutation rate and selection toward plasma cells. Effector cytokine of a subset of gamma-delta T cells that functions as part of an inflammatory circuit downstream IL1B, TLR2 and IL23A-IL12B to promote neutrophil recruitment for efficient bacterial clearance. Effector cytokine of innate immune cells including invariant natural killer cell (iNKT) and group 3 innate lymphoid cells that mediate initial neutrophilic inflammation. Involved in the maintenance of the integrity of epithelial barriers during homeostasis and pathogen infection. Upon acute injury, has a direct role in epithelial barrier formation by regulating OCLN localization and tight junction biogenesis. As part of the mucosal immune response induced by commensal bacteria, enhances host's ability to resist pathogenic bacterial and fungal infections by promoting neutrophil recruitment and antimicrobial peptides release. In synergy with IL17F, mediates the production of antimicrobial beta-defensins DEFB1, DEFB103A, and DEFB104A by mucosal epithelial cells, limiting the entry of microbes through the epithelial barriers. Involved in antiviral host defense through various mechanisms. In Rattus norvegicus (Rat), this protein is Interleukin-17A (Il17a).